A 672-amino-acid polypeptide reads, in one-letter code: Protein OS-9 (672 aa).

An N-terminal signal peptide occupies residues 1 to 26 (MAAEVLLSSLLGLLFLGLLLPARLTG). The 123-residue stretch at 108–230 (APCLLKTKDW…TIRTSRLCPH (123 aa)) folds into the MRH domain. A disulfide bond links C110 and C123. Residues W117, W118, and Q130 each coordinate a mannooligosaccharide derivative. N-linked (GlcNAc...) asparagine glycosylation is present at N177. Cystine bridges form between C181/C216 and C196/C228. A mannooligosaccharide derivative contacts are provided by D182, R188, E212, and Y218. 4 disordered regions span residues 261–355 (RQAE…NVQV), 372–452 (KAAE…LLPS), 511–548 (ENQSPELVQKYKKRRVVPQKPPPSPHPTEEEPEHRVRV), and 637–672 (EANKERQRQSELESNYRRVWGSPGGEDTGDLDEFDF). Composition is skewed to basic and acidic residues over residues 263 to 281 (AESKQHEEKTTEEVQDTDR), 294 to 310 (PKKEDVSPAKEEKESEL), 320 to 338 (AAAREEAQAGEQDLNHEAA), 372 to 386 (KAAEKGKPSVRREQP), and 394 to 409 (PQREAEGTKAKGKDGE). Over residues 414 to 435 (MEEEDGDDEEEEEEEEEDEEEQ) the composition is skewed to acidic residues. The span at 637 to 652 (EANKERQRQSELESNY) shows a compositional bias: basic and acidic residues. Positions 663–672 (DTGDLDEFDF) are enriched in acidic residues.

The protein belongs to the OS-9 family. In terms of assembly, component of the HRD1 complex, which comprises at least SYNV1/HRD1, DERL1/2, FAM8A1, HERPUD1/HERP, OS9, SEL1L and UBE2J1. FAM8A1 is stabilized by interaction with SYNV1, which prevents its proteasomal degradation. OS9 and UBE2J1 recruitment to the complex may be mediated by SEL1L. Through this complex, may interact with ERLEC1 and HSPA5. Interacts (via C-terminus) with CPNE6 (via second C2 domain); this interaction occurs in a calcium-dependent manner in vitro. Interacts with CREB3. N-glycosylated. In terms of processing, intramolecular disulfide bonds.

The protein resides in the endoplasmic reticulum lumen. Lectin component of the HRD1 complex, which functions in endoplasmic reticulum (ER) quality control and ER-associated degradation (ERAD). Specifically recognizes and binds improperly folded glycoproteins as well as hyperglycosylated proteins, retain them in the ER, and transfers them to the ubiquitination machinery and promote their degradation. Possible targets include TRPV4 as well as hyperglycosylated HSP90B1. This is Protein OS-9 (Os9) from Mus musculus (Mouse).